The chain runs to 505 residues: Tyrosine-protein kinase isoform SRK1 (505 aa).

Polar residues-rich tracts occupy residues 1 to 10 and 18 to 31; these read MGSCCSSQDG and AGSTVDSHELSQSV. A disordered region spans residues 1–53; sequence MGSCCSSQDGDGNGKATAGSTVDSHELSQSVKGKIKQPEPKPKPPPQVPPAQD. The SH3 domain occupies 54–116; it reads VKYPIYVGKY…PSNYVAEYKS (63 aa). The region spanning 122-214 is the SH2 domain; the sequence is WFLGKIKRVE…GLCCKLLYPC (93 aa). The 254-residue stretch at 240 to 493 folds into the Protein kinase domain; the sequence is IKLLRRLGAG…TLQWQLEEFF (254 aa). ATP is bound by residues 246 to 254 and K268; that span reads LGAGQFGEV. Residue D359 is the Proton acceptor of the active site.

It belongs to the protein kinase superfamily. Tyr protein kinase family. SRC subfamily.

The protein localises to the cytoplasm. The enzyme catalyses L-tyrosyl-[protein] + ATP = O-phospho-L-tyrosyl-[protein] + ADP + H(+). This chain is Tyrosine-protein kinase isoform SRK1 (SRK1), found in Spongilla lacustris (Freshwater sponge).